A 232-amino-acid polypeptide reads, in one-letter code: LexA repressor (232 aa).

Residues 26–46 (FDEMKDALDLRSKSGIHRLIT) constitute a DNA-binding region (H-T-H motif). Active-site for autocatalytic cleavage activity residues include S153 and K191.

This sequence belongs to the peptidase S24 family. In terms of assembly, homodimer.

It catalyses the reaction Hydrolysis of Ala-|-Gly bond in repressor LexA.. Represses a number of genes involved in the response to DNA damage (SOS response), including recA and lexA. In the presence of single-stranded DNA, RecA interacts with LexA causing an autocatalytic cleavage which disrupts the DNA-binding part of LexA, leading to derepression of the SOS regulon and eventually DNA repair. In Bradyrhizobium sp. (strain ORS 278), this protein is LexA repressor.